Here is a 75-residue protein sequence, read N- to C-terminus: UPF0291 protein lin1342 (75 aa).

The segment at I55–K75 is disordered. Residues H65–K75 show a composition bias toward basic residues.

This sequence belongs to the UPF0291 family.

It localises to the cytoplasm. The polypeptide is UPF0291 protein lin1342 (Listeria innocua serovar 6a (strain ATCC BAA-680 / CLIP 11262)).